The sequence spans 95 residues: Small ribosomal subunit protein bS6 (95 aa).

Belongs to the bacterial ribosomal protein bS6 family.

Its function is as follows. Binds together with bS18 to 16S ribosomal RNA. The protein is Small ribosomal subunit protein bS6 of Shouchella clausii (strain KSM-K16) (Alkalihalobacillus clausii).